Reading from the N-terminus, the 72-residue chain is MSKEGKITLKGKVVTALQGGQFKVLLENNVEIIANVSGKIRVYKIQILKGDTVEVELSPYDLTRGRIIYRIS.

Positions 1 to 72 constitute an S1-like domain; the sequence is MSKEGKITLK…TRGRIIYRIS (72 aa).

It belongs to the IF-1 family. As to quaternary structure, component of the 30S ribosomal translation pre-initiation complex which assembles on the 30S ribosome in the order IF-2 and IF-3, IF-1 and N-formylmethionyl-tRNA(fMet); mRNA recruitment can occur at any time during PIC assembly.

It is found in the cytoplasm. In terms of biological role, one of the essential components for the initiation of protein synthesis. Stabilizes the binding of IF-2 and IF-3 on the 30S subunit to which N-formylmethionyl-tRNA(fMet) subsequently binds. Helps modulate mRNA selection, yielding the 30S pre-initiation complex (PIC). Upon addition of the 50S ribosomal subunit IF-1, IF-2 and IF-3 are released leaving the mature 70S translation initiation complex. The polypeptide is Translation initiation factor IF-1 (Malacoplasma penetrans (strain HF-2) (Mycoplasma penetrans)).